We begin with the raw amino-acid sequence, 90 residues long: Electron transfer flavoprotein regulatory factor 1 (90 aa).

This sequence belongs to the complex I LYR family. As to quaternary structure, homotetramer. Interacts with NDUFAB1. Interacts with ETFA. Interacts with ETFB.

Its subcellular location is the mitochondrion. In terms of biological role, acts as a regulator of the electron transfer flavoprotein by promoting the removal of flavin from the ETF holoenzyme (composed of ETFA and ETFB). This chain is Electron transfer flavoprotein regulatory factor 1, found in Homo sapiens (Human).